A 424-amino-acid chain; its full sequence is UDP-N-acetylglucosamine 1-carboxyvinyltransferase (424 aa).

Lys22–Asn23 is a binding site for phosphoenolpyruvate. Residue Arg93 coordinates UDP-N-acetyl-alpha-D-glucosamine. The Proton donor role is filled by Cys117. At Cys117 the chain carries 2-(S-cysteinyl)pyruvic acid O-phosphothioketal. Residues Arg122–Leu126, Asp307, and Val329 each bind UDP-N-acetyl-alpha-D-glucosamine.

This sequence belongs to the EPSP synthase family. MurA subfamily.

It is found in the cytoplasm. It carries out the reaction phosphoenolpyruvate + UDP-N-acetyl-alpha-D-glucosamine = UDP-N-acetyl-3-O-(1-carboxyvinyl)-alpha-D-glucosamine + phosphate. It participates in cell wall biogenesis; peptidoglycan biosynthesis. Functionally, cell wall formation. Adds enolpyruvyl to UDP-N-acetylglucosamine. The chain is UDP-N-acetylglucosamine 1-carboxyvinyltransferase from Chlorobium limicola (strain DSM 245 / NBRC 103803 / 6330).